The following is a 245-amino-acid chain: GATA zinc finger domain-containing protein 1 (245 aa).

A GATA-type zinc finger spans residues 9 to 33 (CSMCKTNTSSMWKKGSQGEILCNNC). Low complexity predominate over residues 39–70 (TAAGGNNNNNSSSSTSGSSSYTGTTFASTSTS). A disordered region spans residues 39–110 (TAAGGNNNNN…PAAEKKVSTK (72 aa)). Positions 71 to 80 (QQSNGGNTKQ) are enriched in polar residues.

It is found in the nucleus. Functionally, component of some chromatin complex recruited to chromatin sites methylated 'Lys-4' of histone H3 (H3K4me), with a preference for trimethylated form (H3K4me3). The polypeptide is GATA zinc finger domain-containing protein 1 (gatad1) (Xenopus laevis (African clawed frog)).